The following is a 284-amino-acid chain: MSATNEVITSGSYIKHHLQNLTYGQFPDGHWRFAHTTSEAKEMGFWAFHLDTLSISFILGALFLIFFYKVGKKMTSDTPSGAQNFIESVIDFINDNVRGSFNSQNPMVAPLALTTFIWIVLMNTMDLVPVDWLPYVAQQIGVWLGADPHHVFFKMVPTADPNATLGMSIGIFILIIYYSIKEKGAGGFAAELTFHPFGKMMLPFNLFLEGVNLIAKPVSLALRLFGNMYAGEMIFILIALLPFWVQWSLSLPWAIFHILIVLLQAFIFMTLVIVYMDMAHQKKH.

5 helical membrane passes run A47–F67, V108–V128, V156–I176, M233–W253, and A254–V274.

This sequence belongs to the ATPase A chain family. In terms of assembly, F-type ATPases have 2 components, CF(1) - the catalytic core - and CF(0) - the membrane proton channel. CF(1) has five subunits: alpha(3), beta(3), gamma(1), delta(1), epsilon(1). CF(0) has three main subunits: a(1), b(2) and c(9-12). The alpha and beta chains form an alternating ring which encloses part of the gamma chain. CF(1) is attached to CF(0) by a central stalk formed by the gamma and epsilon chains, while a peripheral stalk is formed by the delta and b chains.

Its subcellular location is the cell inner membrane. In terms of biological role, key component of the proton channel; it plays a direct role in the translocation of protons across the membrane. The polypeptide is ATP synthase subunit a (Ruthia magnifica subsp. Calyptogena magnifica).